Reading from the N-terminus, the 378-residue chain is Chaperone protein DnaJ (378 aa).

Residues 5–70 enclose the J domain; that stretch reads DYYEVLGVAK…QKRAAYDQYG (66 aa). The segment at 138 to 216 adopts a CR-type zinc-finger fold; that stretch reads GYDTQIRVPS…CHGSGKVKET (79 aa). Residues Cys151, Cys154, Cys168, Cys171, Cys190, Cys193, Cys204, and Cys207 each coordinate Zn(2+). CXXCXGXG motif repeat units follow at residues 151-158, 168-175, 190-197, and 204-211; these read CEVCHGSG, CPTCHGQG, CPKCHGTG, and CVHCHGSG.

It belongs to the DnaJ family. As to quaternary structure, homodimer. Zn(2+) is required as a cofactor.

It localises to the cytoplasm. Participates actively in the response to hyperosmotic and heat shock by preventing the aggregation of stress-denatured proteins and by disaggregating proteins, also in an autonomous, DnaK-independent fashion. Unfolded proteins bind initially to DnaJ; upon interaction with the DnaJ-bound protein, DnaK hydrolyzes its bound ATP, resulting in the formation of a stable complex. GrpE releases ADP from DnaK; ATP binding to DnaK triggers the release of the substrate protein, thus completing the reaction cycle. Several rounds of ATP-dependent interactions between DnaJ, DnaK and GrpE are required for fully efficient folding. Also involved, together with DnaK and GrpE, in the DNA replication of plasmids through activation of initiation proteins. The protein is Chaperone protein DnaJ of Burkholderia lata (strain ATCC 17760 / DSM 23089 / LMG 22485 / NCIMB 9086 / R18194 / 383).